We begin with the raw amino-acid sequence, 288 residues long: ATP synthase gamma chain (288 aa).

This sequence belongs to the ATPase gamma chain family. F-type ATPases have 2 components, CF(1) - the catalytic core - and CF(0) - the membrane proton channel. CF(1) has five subunits: alpha(3), beta(3), gamma(1), delta(1), epsilon(1). CF(0) has three main subunits: a, b and c.

It is found in the cell inner membrane. In terms of biological role, produces ATP from ADP in the presence of a proton gradient across the membrane. The gamma chain is believed to be important in regulating ATPase activity and the flow of protons through the CF(0) complex. This Actinobacillus pleuropneumoniae serotype 3 (strain JL03) protein is ATP synthase gamma chain.